The chain runs to 714 residues: Polyribonucleotide nucleotidyltransferase (714 aa).

Asp-487 and Asp-493 together coordinate Mg(2+). Positions 554-613 (PRIEVMTIPVDKIREVIGSGGKVIREIVEKTGAKINIEDDGTIKIASASGKEIEAARKWI) constitute a KH domain. Residues 623–691 (GVVYEGTVVK…ERGKVRLSMK (69 aa)) enclose the S1 motif domain.

The protein belongs to the polyribonucleotide nucleotidyltransferase family. The cofactor is Mg(2+).

The protein resides in the cytoplasm. The enzyme catalyses RNA(n+1) + phosphate = RNA(n) + a ribonucleoside 5'-diphosphate. Its function is as follows. Involved in mRNA degradation. Catalyzes the phosphorolysis of single-stranded polyribonucleotides processively in the 3'- to 5'-direction. The chain is Polyribonucleotide nucleotidyltransferase from Allorhizobium ampelinum (strain ATCC BAA-846 / DSM 112012 / S4) (Agrobacterium vitis (strain S4)).